The primary structure comprises 298 residues: tRNA pseudouridine synthase B (298 aa).

Residue aspartate 45 is the Nucleophile of the active site.

Belongs to the pseudouridine synthase TruB family. Type 1 subfamily.

It catalyses the reaction uridine(55) in tRNA = pseudouridine(55) in tRNA. In terms of biological role, responsible for synthesis of pseudouridine from uracil-55 in the psi GC loop of transfer RNAs. The polypeptide is tRNA pseudouridine synthase B (Thiobacillus denitrificans (strain ATCC 25259 / T1)).